The following is a 407-amino-acid chain: L-amino-acid oxidase (407 aa).

C10 and C94 are disulfide-bonded. A glycan (N-linked (GlcNAc...) asparagine) is linked at N93. Position 144 (H144) interacts with substrate. V182 provides a ligand contact to FAD. Residues C252 and C333 are joined by a disulfide bond. N282 carries N-linked (GlcNAc...) asparagine glycosylation. Y293 serves as a coordination point for substrate. FAD is bound by residues E378 and G385 to T390. Substrate is bound at residue G385–W386.

It belongs to the flavin monoamine oxidase family. FIG1 subfamily. As to quaternary structure, homodimer; non-covalently linked. The cofactor is FAD. In terms of tissue distribution, expressed by the venom gland.

Its subcellular location is the secreted. The catalysed reaction is an L-alpha-amino acid + O2 + H2O = a 2-oxocarboxylate + H2O2 + NH4(+). The enzyme catalyses L-leucine + O2 + H2O = 4-methyl-2-oxopentanoate + H2O2 + NH4(+). It carries out the reaction L-phenylalanine + O2 + H2O = 3-phenylpyruvate + H2O2 + NH4(+). It catalyses the reaction L-isoleucine + O2 + H2O = (S)-3-methyl-2-oxopentanoate + H2O2 + NH4(+). The catalysed reaction is L-aspartate + O2 + H2O = oxaloacetate + H2O2 + NH4(+). The enzyme catalyses L-lysine + O2 + H2O = 6-amino-2-oxohexanoate + H2O2 + NH4(+). It carries out the reaction L-glutamate + O2 + H2O = H2O2 + 2-oxoglutarate + NH4(+). In terms of biological role, catalyzes an oxidative deamination of predominantly hydrophobic and aromatic L-amino acids, thus producing hydrogen peroxide that may contribute to the diverse toxic effects of this enzyme. Is highly active on L-Leu followed by L-Phe and L-Ile, moderately active on L-Asp, L-Glu, and L-Lys, and not active on L-Pro, L-Asn, L-Gly, L-Ser and L-Cys. Exhibits diverse biological activities such as antibacterial activity (Minimal inhibitory concentrations (MIC) are 9.0 ug/ml against S.aureus, 144.0 ug/ml against P.aeruginosa and 288.0 ug/ml against E.coli) and inhibition of ADP- and TMVA-induced platelet aggregation. Effects of snake L-amino oxidases on platelets are controversial, since they either induce aggregation or inhibit agonist-induced aggregation. These different effects are probably due to different experimental conditions. Unlike other snake venom L-amino acid oxidases, does not induce hemorrhage. This protein may also induce hemolysis, edema, apoptosis and have antiparasitic activities. The polypeptide is L-amino-acid oxidase (Daboia siamensis (Eastern Russel's viper)).